The following is a 298-amino-acid chain: tRNA(Met) cytidine acetate ligase (298 aa).

ATP-binding positions include 6–19, glycine 100, asparagine 157, and arginine 182; that span reads IAEY…HIYQ.

It belongs to the TmcAL family.

Its subcellular location is the cytoplasm. The enzyme catalyses cytidine(34) in elongator tRNA(Met) + acetate + ATP = N(4)-acetylcytidine(34) in elongator tRNA(Met) + AMP + diphosphate. Functionally, catalyzes the formation of N(4)-acetylcytidine (ac(4)C) at the wobble position of elongator tRNA(Met), using acetate and ATP as substrates. First activates an acetate ion to form acetyladenylate (Ac-AMP) and then transfers the acetyl group to tRNA to form ac(4)C34. This Mycoplasmopsis pulmonis (strain UAB CTIP) (Mycoplasma pulmonis) protein is tRNA(Met) cytidine acetate ligase.